The primary structure comprises 329 residues: Sialic acid-binding periplasmic protein SiaP (329 aa).

An N-terminal signal peptide occupies residues 1 to 23; the sequence is MMKLTKLFLATAISLGVSSAVLA. Residues N33, D72, E90, R150, R170, and N210 each coordinate N-acetyl-beta-neuraminate.

Belongs to the bacterial solute-binding protein 7 family. As to quaternary structure, the complex comprises the extracytoplasmic solute receptor protein SiaP, and the fused transmembrane protein SiaT.

Its subcellular location is the periplasm. In terms of biological role, part of the tripartite ATP-independent periplasmic (TRAP) transport system SiaPT involved in the uptake of sialic acid (N-acetyl-beta-neuraminate). This protein specifically binds sialic acid with high affinity. N-Acetylneuraminate (sialic acid) can then be incorporated into the lipooligosaccharides (LOS) as a terminal non-reducing sugar, protecting the bacterium from complement-mediated killing by normal human serum. This is Sialic acid-binding periplasmic protein SiaP (siaP) from Haemophilus influenzae (strain ATCC 51907 / DSM 11121 / KW20 / Rd).